Reading from the N-terminus, the 473-residue chain is Photosystem II CP43 reaction center protein (473 aa).

Residues Met1–Glu14 constitute a propeptide that is removed on maturation. Thr15 bears the N-acetylthreonine mark. A Phosphothreonine modification is found at Thr15. Helical transmembrane passes span Leu69 to Ala93, Leu134 to Asn155, Lys178 to Thr200, Lys255 to Ser275, and Trp291 to Ala312. Residue Glu367 participates in [CaMn4O5] cluster binding. The helical transmembrane segment at Arg447–Pro471 threads the bilayer.

The protein belongs to the PsbB/PsbC family. PsbC subfamily. PSII is composed of 1 copy each of membrane proteins PsbA, PsbB, PsbC, PsbD, PsbE, PsbF, PsbH, PsbI, PsbJ, PsbK, PsbL, PsbM, PsbT, PsbX, PsbY, PsbZ, Psb30/Ycf12, at least 3 peripheral proteins of the oxygen-evolving complex and a large number of cofactors. It forms dimeric complexes. Binds multiple chlorophylls and provides some of the ligands for the Ca-4Mn-5O cluster of the oxygen-evolving complex. It may also provide a ligand for a Cl- that is required for oxygen evolution. PSII binds additional chlorophylls, carotenoids and specific lipids. is required as a cofactor.

Its subcellular location is the plastid. It is found in the chloroplast thylakoid membrane. One of the components of the core complex of photosystem II (PSII). It binds chlorophyll and helps catalyze the primary light-induced photochemical processes of PSII. PSII is a light-driven water:plastoquinone oxidoreductase, using light energy to abstract electrons from H(2)O, generating O(2) and a proton gradient subsequently used for ATP formation. In Atropa belladonna (Belladonna), this protein is Photosystem II CP43 reaction center protein.